Consider the following 410-residue polypeptide: Peptidase T (410 aa).

A Zn(2+)-binding site is contributed by His-79. Asp-81 is a catalytic residue. Asp-142 contributes to the Zn(2+) binding site. Residue Glu-176 is the Proton acceptor of the active site. Zn(2+) is bound by residues Glu-177, Asp-199, and His-381.

Belongs to the peptidase M20B family. Zn(2+) serves as cofactor.

It localises to the cytoplasm. It carries out the reaction Release of the N-terminal residue from a tripeptide.. Cleaves the N-terminal amino acid of tripeptides. The protein is Peptidase T of Bacillus velezensis (strain DSM 23117 / BGSC 10A6 / LMG 26770 / FZB42) (Bacillus amyloliquefaciens subsp. plantarum).